Consider the following 282-residue polypeptide: Formamidopyrimidine-DNA glycosylase (282 aa).

The active-site Schiff-base intermediate with DNA is Pro-2. The active-site Proton donor is Glu-3. Lys-60 functions as the Proton donor; for beta-elimination activity in the catalytic mechanism. Residues His-99, Arg-118, and Arg-163 each contribute to the DNA site. Residues 248 to 282 form an FPG-type zinc finger; it reads WVYGRTGEPCRVCGTSIERLKLGGRSAHFCPRCQA. Residue Arg-272 is the Proton donor; for delta-elimination activity of the active site.

The protein belongs to the FPG family. Monomer. The cofactor is Zn(2+).

It carries out the reaction Hydrolysis of DNA containing ring-opened 7-methylguanine residues, releasing 2,6-diamino-4-hydroxy-5-(N-methyl)formamidopyrimidine.. The catalysed reaction is 2'-deoxyribonucleotide-(2'-deoxyribose 5'-phosphate)-2'-deoxyribonucleotide-DNA = a 3'-end 2'-deoxyribonucleotide-(2,3-dehydro-2,3-deoxyribose 5'-phosphate)-DNA + a 5'-end 5'-phospho-2'-deoxyribonucleoside-DNA + H(+). Involved in base excision repair of DNA damaged by oxidation or by mutagenic agents. Acts as a DNA glycosylase that recognizes and removes damaged bases. Has a preference for oxidized purines, such as 7,8-dihydro-8-oxoguanine (8-oxoG). Has AP (apurinic/apyrimidinic) lyase activity and introduces nicks in the DNA strand. Cleaves the DNA backbone by beta-delta elimination to generate a single-strand break at the site of the removed base with both 3'- and 5'-phosphates. The polypeptide is Formamidopyrimidine-DNA glycosylase (Rippkaea orientalis (strain PCC 8801 / RF-1) (Cyanothece sp. (strain PCC 8801))).